Consider the following 338-residue polypeptide: Mitochondrial E3 ubiquitin protein ligase 1 (338 aa).

The Cytoplasmic segment spans residues 1 to 3; sequence MEF. The helical transmembrane segment at 4 to 24 threads the bilayer; that stretch reads LHESVALGVDLLILGLCAREY. At 25–227 the chain is on the mitochondrial intermembrane side; the sequence is VHYKRTAKVL…LIKRFEDAKT (203 aa). Residues 228–248 form a helical membrane-spanning segment; the sequence is TTILKLVVCSTISAILVAFIA. Residues 249 to 338 are Cytoplasmic-facing; the sequence is KKLYRKRKQE…IVSKAAAFIA (90 aa). An RING-type zinc finger spans residues 290–326; it reads CVVCSTNPKEIILLPCGHVCLCEDCAQKISVTCPVCR.

As to quaternary structure, interacts with Marf. Post-translationally, auto-ubiquitinated.

It localises to the mitochondrion outer membrane. The catalysed reaction is S-ubiquitinyl-[E2 ubiquitin-conjugating enzyme]-L-cysteine + [acceptor protein]-L-lysine = [E2 ubiquitin-conjugating enzyme]-L-cysteine + N(6)-ubiquitinyl-[acceptor protein]-L-lysine.. Functionally, exhibits weak E3 ubiquitin-protein ligase activity. E3 ubiquitin ligases accept ubiquitin from an E2 ubiquitin-conjugating enzyme in the form of a thioester and then directly transfer the ubiquitin to targeted substrates. Plays a role in the control of mitochondrial morphology by promoting mitochondrial fission. Negatively regulates the mitochondrial fusion protein marf by promoting its ubiquitination, acting in a pathway that is parallel to the park/pink1 regulatory pathway. In Drosophila melanogaster (Fruit fly), this protein is Mitochondrial E3 ubiquitin protein ligase 1.